A 265-amino-acid chain; its full sequence is Diphthine synthase (265 aa).

S-adenosyl-L-methionine-binding positions include L10, D87, V90, 115-116, L166, A209, and H234; that span reads SI.

Belongs to the diphthine synthase family. In terms of assembly, homodimer.

It carries out the reaction 2-[(3S)-amino-3-carboxypropyl]-L-histidyl-[translation elongation factor 2] + 3 S-adenosyl-L-methionine = diphthine-[translation elongation factor 2] + 3 S-adenosyl-L-homocysteine + 3 H(+). It functions in the pathway protein modification; peptidyl-diphthamide biosynthesis. Functionally, S-adenosyl-L-methionine-dependent methyltransferase that catalyzes the trimethylation of the amino group of the modified target histidine residue in translation elongation factor 2 (EF-2), to form an intermediate called diphthine. The three successive methylation reactions represent the second step of diphthamide biosynthesis. The chain is Diphthine synthase from Pyrococcus horikoshii (strain ATCC 700860 / DSM 12428 / JCM 9974 / NBRC 100139 / OT-3).